Here is a 283-residue protein sequence, read N- to C-terminus: NAD kinase (283 aa).

The Proton acceptor role is filled by Asp66. Residues 66–67 (DG), 140–141 (ND), Arg151, Arg168, Asp170, and Gln240 each bind NAD(+).

It belongs to the NAD kinase family. The cofactor is a divalent metal cation.

It is found in the cytoplasm. The catalysed reaction is NAD(+) + ATP = ADP + NADP(+) + H(+). Its function is as follows. Involved in the regulation of the intracellular balance of NAD and NADP, and is a key enzyme in the biosynthesis of NADP. Catalyzes specifically the phosphorylation on 2'-hydroxyl of the adenosine moiety of NAD to yield NADP. The protein is NAD kinase of Syntrophobacter fumaroxidans (strain DSM 10017 / MPOB).